Here is a 910-residue protein sequence, read N- to C-terminus: Valine--tRNA ligase (910 aa).

A 'HIGH' region motif is present at residues 45 to 55 (PNVTGSLHMGH). The short motif at 554 to 558 (KMSKS) is the 'KMSKS' region element. K557 is a binding site for ATP. The stretch at 842-910 (DLQAEAARLA…TAESRIRDAS (69 aa)) forms a coiled coil.

This sequence belongs to the class-I aminoacyl-tRNA synthetase family. ValS type 1 subfamily. Monomer.

The protein localises to the cytoplasm. The enzyme catalyses tRNA(Val) + L-valine + ATP = L-valyl-tRNA(Val) + AMP + diphosphate. Its function is as follows. Catalyzes the attachment of valine to tRNA(Val). As ValRS can inadvertently accommodate and process structurally similar amino acids such as threonine, to avoid such errors, it has a 'posttransfer' editing activity that hydrolyzes mischarged Thr-tRNA(Val) in a tRNA-dependent manner. This is Valine--tRNA ligase from Brucella melitensis biotype 1 (strain ATCC 23456 / CCUG 17765 / NCTC 10094 / 16M).